The sequence spans 71 residues: Prokaryotic ubiquitin-like protein Pup (71 aa).

The segment covering 1–18 (MPEKDTGGQHRATRRTEE) has biased composition (basic and acidic residues). The interval 1–36 (MPEKDTGGQHRATRRTEEHDETIDEATATSDVQERR) is disordered. Residues 27–65 (TATSDVQERREKLDADVDAILDEIDDVLEENAEEFVRSY) form an ARC ATPase binding region. Residues 30–59 (SDVQERREKLDADVDAILDEIDDVLEENAE) are a coiled coil. Glu71 is covalently cross-linked (Isoglutamyl lysine isopeptide (Glu-Lys) (interchain with K-? in acceptor proteins)).

It belongs to the prokaryotic ubiquitin-like protein family. Strongly interacts with the proteasome-associated ATPase ARC through a hydrophobic interface; the interacting region of Pup lies in its C-terminal half. There is one Pup binding site per ARC hexamer ring.

It participates in protein degradation; proteasomal Pup-dependent pathway. In terms of biological role, protein modifier that is covalently attached to lysine residues of substrate proteins, thereby targeting them for proteasomal degradation. The tagging system is termed pupylation. The sequence is that of Prokaryotic ubiquitin-like protein Pup from Acidothermus cellulolyticus (strain ATCC 43068 / DSM 8971 / 11B).